The following is a 120-amino-acid chain: NAD(P)H-quinone oxidoreductase subunit 3, chloroplastic (120 aa).

3 consecutive transmembrane segments (helical) span residues 9-29 (IFWA…LISG), 64-84 (MFAL…PWAM), and 88-108 (VLGV…IVGS).

Belongs to the complex I subunit 3 family. In terms of assembly, NDH is composed of at least 16 different subunits, 5 of which are encoded in the nucleus.

It is found in the plastid. The protein localises to the chloroplast thylakoid membrane. The catalysed reaction is a plastoquinone + NADH + (n+1) H(+)(in) = a plastoquinol + NAD(+) + n H(+)(out). It catalyses the reaction a plastoquinone + NADPH + (n+1) H(+)(in) = a plastoquinol + NADP(+) + n H(+)(out). NDH shuttles electrons from NAD(P)H:plastoquinone, via FMN and iron-sulfur (Fe-S) centers, to quinones in the photosynthetic chain and possibly in a chloroplast respiratory chain. The immediate electron acceptor for the enzyme in this species is believed to be plastoquinone. Couples the redox reaction to proton translocation, and thus conserves the redox energy in a proton gradient. The sequence is that of NAD(P)H-quinone oxidoreductase subunit 3, chloroplastic from Carica papaya (Papaya).